The chain runs to 560 residues: MKKKFLVKKIITSALPYVNNQPHLGNIIGCVLSADMYARFCRKNNEDVVFLSGTDEYGTAIEMAAFAQNKTPLQICEENRIIHKKIYDWFNIDFDFFGHTTSTAHTKNVQDFFNKIHNNGFFTEQEIEQFFCDKCQIFLADRYVVGTCKFCKYTDAKGDQCDGCGHTYKSLDLIDAKCTLCHSFPNIKSTRHLFFDFNNFKDKLQKLFNTNSQYWSENGKQITKSWLDQELLPRCMTRDLKNRWGVPVPLKDFEEKVFYVWFDAVIGYFTFYKEYVAARSESKELDKNNVFATDNILQDCELVQFMGKDNVFFHTIVFPSLIFATNDSYPLIKKLSVTEFLLFENEKFSKSRGHGIFGLDLVDNTMGQSCLWRYYLAKIRPEKCDSNFSFTHFTNVIDADLNNNIGNFCNRVLKYIKNKNDKLISIDKLEHRDDLMVQTIDKIYKEYLTSFSAIRIREALEKILEISKVGNEYVQQVVSSKIEVPKGFQVAFSIVVLIGQLLEPFIPVSSEKLLKMCNRKKENFCESFYIIKSAEIGDDIKPLFNKLDDSLIERIKNFKK.

The 'HIGH' region signature appears at 16-26 (PYVNNQPHLGN). A 'KMSKS' region motif is present at residues 347-351 (KFSKS). K350 lines the ATP pocket.

It belongs to the class-I aminoacyl-tRNA synthetase family.

The protein localises to the cytoplasm. The enzyme catalyses tRNA(Met) + L-methionine + ATP = L-methionyl-tRNA(Met) + AMP + diphosphate. This chain is Probable methionine--tRNA ligase, cytoplasmic, found in Vairimorpha ceranae (strain BRL01) (Microsporidian parasite).